Consider the following 116-residue polypeptide: UPF0102 protein Sala_0262 (116 aa).

It belongs to the UPF0102 family.

The polypeptide is UPF0102 protein Sala_0262 (Sphingopyxis alaskensis (strain DSM 13593 / LMG 18877 / RB2256) (Sphingomonas alaskensis)).